The following is a 355-amino-acid chain: Probable nitronate monooxygenase (355 aa).

FMN-binding positions include Asn71, Gln175, Gly180, Gly218, and Gln237–Thr240.

The protein belongs to the nitronate monooxygenase family. NMO class I subfamily. FMN is required as a cofactor.

It catalyses the reaction 3 propionate 3-nitronate + 3 O2 + H2O = 3 3-oxopropanoate + 2 nitrate + nitrite + H2O2 + 3 H(+). In terms of biological role, nitronate monooxygenase that uses molecular oxygen to catalyze the oxidative denitrification of alkyl nitronates. Acts on propionate 3-nitronate (P3N), the presumed physiological substrate. Probably functions in the detoxification of P3N, a metabolic poison produced by plants and fungi as a defense mechanism. In Staphylococcus aureus (strain MRSA252), this protein is Probable nitronate monooxygenase.